A 333-amino-acid chain; its full sequence is Ketol-acid reductoisomerase (NADP(+)) (333 aa).

The region spanning 2–182 (ANIYYDADCD…GGGRAGILET (181 aa)) is the KARI N-terminal Rossmann domain. Residues 25 to 28 (YGSQ), lysine 48, serine 51, serine 53, and 83 to 86 (DTIQ) contribute to the NADP(+) site. The active site involves histidine 108. Position 134 (glycine 134) interacts with NADP(+). The KARI C-terminal knotted domain occupies 183–331 (SFREETETDL…KKLRSMMKWL (149 aa)). Residues aspartate 191, glutamate 195, glutamate 227, and glutamate 231 each contribute to the Mg(2+) site. Serine 252 is a substrate binding site.

This sequence belongs to the ketol-acid reductoisomerase family. Mg(2+) serves as cofactor.

It carries out the reaction (2R)-2,3-dihydroxy-3-methylbutanoate + NADP(+) = (2S)-2-acetolactate + NADPH + H(+). The enzyme catalyses (2R,3R)-2,3-dihydroxy-3-methylpentanoate + NADP(+) = (S)-2-ethyl-2-hydroxy-3-oxobutanoate + NADPH + H(+). It participates in amino-acid biosynthesis; L-isoleucine biosynthesis; L-isoleucine from 2-oxobutanoate: step 2/4. Its pathway is amino-acid biosynthesis; L-valine biosynthesis; L-valine from pyruvate: step 2/4. Its function is as follows. Involved in the biosynthesis of branched-chain amino acids (BCAA). Catalyzes an alkyl-migration followed by a ketol-acid reduction of (S)-2-acetolactate (S2AL) to yield (R)-2,3-dihydroxy-isovalerate. In the isomerase reaction, S2AL is rearranged via a Mg-dependent methyl migration to produce 3-hydroxy-3-methyl-2-ketobutyrate (HMKB). In the reductase reaction, this 2-ketoacid undergoes a metal-dependent reduction by NADPH to yield (R)-2,3-dihydroxy-isovalerate. The sequence is that of Ketol-acid reductoisomerase (NADP(+)) from Leptospira borgpetersenii serovar Hardjo-bovis (strain JB197).